Consider the following 273-residue polypeptide: MSTMTDRYAVIGNPIAHSKSPDIHARFAAQTQQDMRYEPLLAPLDGFLATVQDFVRNGGKGVNVTVPFKLEAYALATTLTERARAAGAVNTLKFDGADMLGDNTDGFGLVSDIVRNAKVEIANKSVLLLGAGGAARGVLLPLLHEQPARLVLANRTHSKALDLAHRFAAQPRLKVSTFADLDDSFDIVINATAASLASEVPPISPRVFTAHTLAYDMMYGAQPTAFMRFAAQHGATVRDGLGMLVEQAAESFYLWRGVRPETAAVFAELRAQL.

Residues 18–20 and Thr65 each bind shikimate; that span reads SKS. The active-site Proton acceptor is the Lys69. Glu81 contacts NADP(+). The shikimate site is built by Asn90 and Asp105. NADP(+)-binding positions include 130-134, 154-159, and Met217; these read GAGGA and NRTHSK. A shikimate-binding site is contributed by Tyr219. Gly240 serves as a coordination point for NADP(+).

The protein belongs to the shikimate dehydrogenase family. As to quaternary structure, homodimer.

The enzyme catalyses shikimate + NADP(+) = 3-dehydroshikimate + NADPH + H(+). The protein operates within metabolic intermediate biosynthesis; chorismate biosynthesis; chorismate from D-erythrose 4-phosphate and phosphoenolpyruvate: step 4/7. Functionally, involved in the biosynthesis of the chorismate, which leads to the biosynthesis of aromatic amino acids. Catalyzes the reversible NADPH linked reduction of 3-dehydroshikimate (DHSA) to yield shikimate (SA). The chain is Shikimate dehydrogenase (NADP(+)) from Herminiimonas arsenicoxydans.